A 395-amino-acid chain; its full sequence is S-adenosylmethionine synthase (395 aa).

Residue His16 participates in ATP binding. Residue Asp18 coordinates Mg(2+). Glu44 provides a ligand contact to K(+). Glu57 and Gln100 together coordinate L-methionine. Positions 100-110 (QSPDIAQGVDD) are flexible loop. ATP is bound by residues 174–176 (DAK), 241–242 (RF), Asp250, 256–257 (RK), Ala273, and Lys277. Asp250 contacts L-methionine. Lys281 is an L-methionine binding site.

Belongs to the AdoMet synthase family. In terms of assembly, homotetramer; dimer of dimers. Requires Mg(2+) as cofactor. K(+) is required as a cofactor.

Its subcellular location is the cytoplasm. It catalyses the reaction L-methionine + ATP + H2O = S-adenosyl-L-methionine + phosphate + diphosphate. It functions in the pathway amino-acid biosynthesis; S-adenosyl-L-methionine biosynthesis; S-adenosyl-L-methionine from L-methionine: step 1/1. Functionally, catalyzes the formation of S-adenosylmethionine (AdoMet) from methionine and ATP. The overall synthetic reaction is composed of two sequential steps, AdoMet formation and the subsequent tripolyphosphate hydrolysis which occurs prior to release of AdoMet from the enzyme. In Limosilactobacillus reuteri (strain DSM 20016) (Lactobacillus reuteri), this protein is S-adenosylmethionine synthase.